Consider the following 83-residue polypeptide: Late seed maturation protein P8B6 (83 aa).

Basic and acidic residues-rich tracts occupy residues Met-1–Glu-18 and Ala-37–Leu-51. The segment at Met-1–Thr-83 is disordered. The segment covering Glu-73–Thr-83 has biased composition (acidic residues).

The protein belongs to the small hydrophilic plant seed protein family.

The protein localises to the cytoplasm. In terms of biological role, this protein may play a role in equipping the seed for survival, maintaining a minimal level of hydration in the dry organism and preventing the denaturation of cytoplasmic components, or may play a role during imbibition by controlling water uptake. In Raphanus sativus (Radish), this protein is Late seed maturation protein P8B6.